The primary structure comprises 533 residues: Purine-cytosine permease FCY2 (533 aa).

At 1 to 98 (MLEEGNNVYE…NAASMWFSAN (98 aa)) the chain is on the cytoplasmic side. A Glycyl lysine isopeptide (Lys-Gly) (interchain with G-Cter in ubiquitin) cross-link involves residue Lys16. The residue at position 18 (Ser18) is a Phosphoserine. The helical transmembrane segment at 99 to 119 (MVIASYALGALGPMVFGLNFG) threads the bilayer. Over 120-121 (QS) the chain is Extracellular. A helical membrane pass occupies residues 122 to 141 (VLVIIFFNIMGLIFVAFFSV). Residues 142–198 (FGAELGLRQMILSRYLVGNVTARIFSLINVIACVGWGIVNTSVSAQLLNMVNEGSGH) are Cytoplasmic-facing. Residues 165 to 184 (IFSLINVIACVGWGIVNTSV) form a surface seeking region. A helical transmembrane segment spans residues 199–218 (VCPIWAGCLIIIGGTVLVTF). Topologically, residues 219-256 (FGYSVIHAYEKWSWVPNFAVFLVIIAQLSRSGKFKGGE) are extracellular. The helical transmembrane segment at 257–276 (WVGGATTAGSVLSFGSSIFG) threads the bilayer. Residues 277-300 (FAAGWTTYAADYTVYMPKSTNKYK) are Cytoplasmic-facing. Residues 301–320 (IFFSLVAGLAFPLFFTMILG) traverse the membrane as a helical segment. Residues 321 to 347 (AASAMAALNDPTWKAYYDKNAMGGVIY) are Extracellular-facing. The helical transmembrane segment at 348–367 (AILVPNSLNGFGQFCCVLLA) threads the bilayer. At 368–398 (LSTIANNIPNMYTVALSAQALWAPLAKIPRV) the chain is on the cytoplasmic side. The chain crosses the membrane as a helical span at residues 399 to 418 (VWTMAGNAATLGISIPATYY). At 419–465 (FDGFMENFMDSIGYYLAIYIAISCSEHFFYRRSFSAYNIDDWDNWEH) the chain is on the extracellular side. A helical transmembrane segment spans residues 466–485 (LPIGIAGTAALIVGAFGVAL). Topologically, residues 486-533 (GMCQTYWVGEIGRLIGKYGGDIGFELGASWAFIIYNILRPLELKYFGR) are cytoplasmic.

The protein belongs to the purine-cytosine permease (2.A.39) family. Not N-glycosylated.

The protein localises to the membrane. Functionally, this permease has a broad specificity towards purines, and also transport cytosine and 5-methylcytosine but neither uracil nor thymine. The protein is Purine-cytosine permease FCY2 (FCY2) of Saccharomyces cerevisiae (strain ATCC 204508 / S288c) (Baker's yeast).